A 234-amino-acid chain; its full sequence is UPF0441 protein plu3956 (234 aa).

2 disordered regions span residues Gln-105–Gly-129 and Ser-149–Gly-234. The segment covering Thr-110–Gln-127 has biased composition (low complexity). Residues Ala-150–Lys-175 show a composition bias toward polar residues. Low complexity-rich tracts occupy residues Thr-188–Thr-205 and Gln-216–Gly-234.

This sequence belongs to the UPF0441 family.

The chain is UPF0441 protein plu3956 from Photorhabdus laumondii subsp. laumondii (strain DSM 15139 / CIP 105565 / TT01) (Photorhabdus luminescens subsp. laumondii).